We begin with the raw amino-acid sequence, 146 residues long: Hemoglobin subunit beta (146 aa).

In terms of domain architecture, Globin spans 2–146 (HWTAEEKSAI…VAHALAHQYH (145 aa)). Heme b is bound by residues His-63 and His-92.

This sequence belongs to the globin family. Heterotetramer of two alpha chains and two beta chains. Oxygenation results in dissociation to dimers. Red blood cells.

In terms of biological role, involved in oxygen transport from the lung to the various peripheral tissues. The chain is Hemoglobin subunit beta (HBB) from Erythrolamprus miliaris (South American water snake).